Here is a 344-residue protein sequence, read N- to C-terminus: Pre-mRNA-splicing factor cwc-21 (344 aa).

Positions 1–19 are enriched in polar residues; the sequence is MSDNVGLSTPRGSGTSGYV. 2 disordered regions span residues 1–58 and 98–344; these read MSDN…LEHD and EMER…DNRD. Positions 38–58 are enriched in basic and acidic residues; the sequence is KDFDSLKHQPRQPDKGLLEHD. In terms of domain architecture, CWF21 spans 55–98; that stretch reads LEHDRKREVEVKVFELRDKLEEEGVEEDEIETRCDELRRKLLAE. Positions 69 to 105 form a coiled coil; sequence ELRDKLEEEGVEEDEIETRCDELRRKLLAEMERNQNS. Basic and acidic residues-rich tracts occupy residues 120–167, 188–226, and 238–277; these read QVHE…REAN, RGGD…DRPP, and GGRD…DTGR. Over residues 288 to 306 the composition is skewed to basic residues; sequence SRSRSRSRSYSRSRSPPRR. Basic and acidic residues-rich tracts occupy residues 307 to 316 and 327 to 344; these read RAADSQDRSL and SPDR…DNRD.

This sequence belongs to the CWC21 family. As to quaternary structure, associates with the NTC complex (or PRP19-associated complex). The NTC complex associates with the spliceosome after the release of the U1 and U4 snRNAs and forms the CWC spliceosome subcomplex reminiscent of a late-stage spliceosome.

The protein localises to the cytoplasm. The protein resides in the nucleus. Involved in pre-mRNA splicing. May function at or prior to the first catalytic step of splicing at the catalytic center of the spliceosome. May do so by stabilizing the catalytic center or the position of the RNA substrate. The chain is Pre-mRNA-splicing factor cwc-21 (cwc-21) from Neurospora crassa (strain ATCC 24698 / 74-OR23-1A / CBS 708.71 / DSM 1257 / FGSC 987).